A 221-amino-acid chain; its full sequence is UPF0319 protein NTHI1987 (221 aa).

The signal sequence occupies residues M1–A21.

This sequence belongs to the UPF0319 family.

This is UPF0319 protein NTHI1987 from Haemophilus influenzae (strain 86-028NP).